Reading from the N-terminus, the 109-residue chain is Oncomodulin (109 aa).

At S2 the chain carries N-acetylserine. 2 consecutive EF-hand domains span residues 39 to 74 (MSASQLKDIFQFIDNDQSGYLDEDELKYFLQRFQSD) and 78 to 109 (LTESETKSLMDAADNDGDGKIGADEFQEMVHS). Residues D52, D54, S56, Y58, E63, D91, D93, D95, K97, and E102 each coordinate Ca(2+). The tract at residues 82-109 (ETKSLMDAADNDGDGKIGADEFQEMVHS) is disordered. Basic and acidic residues predominate over residues 94–109 (GDGKIGADEFQEMVHS).

It belongs to the parvalbumin family. In terms of tissue distribution, found in tumor tissues and not detected in normal tissues.

Its function is as follows. Has some calmodulin-like activity with respect to enzyme activation and growth regulation. Binds two calcium ions. This is Oncomodulin (Ocm) from Mus musculus (Mouse).